The sequence spans 422 residues: Terminase, large subunit (422 aa).

Residues 1–198 (MKKVRLSEKF…PANTFVDHST (198 aa)) are ATPase activity. A Walker A motif motif is present at residues 33–40 (GGRGSAKS). The Walker B motif motif lies at 130–135 (GMWIEE). Glu135 functions as the For ATPase activity in the catalytic mechanism. A nuclease activity and binding to the portal protein region spans residues 232–422 (ALGSGVVPFE…MKKGGVSLWG (191 aa)). Mn(2+) is bound by residues Asp266, Asp321, His400, and Asp403.

Monomer. Interacts with the terminase small subunit; the active complex is probably composed of two decameric ring-shaped terminase small subunit and two monomeric terminase large subunit. Interacts with the portal protein. The cofactor is Mn(2+). Requires Mg(2+) as cofactor.

The terminase large subunit acts as an ATP driven molecular motor necessary for viral DNA translocation into empty capsids and as an endonuclease that cuts the viral genome to initiate and to end a packaging reaction. The terminase lies at a unique vertex of the procapsid and is composed of two subunits, a small terminase subunit involved in viral DNA recognition (packaging sequence), and a large terminase subunit possessing endonucleolytic and ATPase activities. Both terminase subunits heterooligomerize and are docked on the portal protein to form the packaging machine. The terminase large subunit exhibits endonuclease activity and cleaves the viral genome concatemer once the capsid is full (headful packaging). Once the capsid is packaged with the DNA, the terminase complex is substituted by the adapter (gp15) and the stopper protein (gp16) that form the connector. The sequence is that of Terminase, large subunit (2) from Bacillus phage SPP1 (Bacteriophage SPP1).